Consider the following 296-residue polypeptide: Malonyl-[acyl-carrier protein] O-methyltransferase (296 aa).

It belongs to the methyltransferase superfamily.

The enzyme catalyses malonyl-[ACP] + S-adenosyl-L-methionine = malonyl-[ACP] methyl ester + S-adenosyl-L-homocysteine. Its pathway is cofactor biosynthesis; biotin biosynthesis. Converts the free carboxyl group of a malonyl-thioester to its methyl ester by transfer of a methyl group from S-adenosyl-L-methionine (SAM). It allows to synthesize pimeloyl-ACP via the fatty acid synthetic pathway. The protein is Malonyl-[acyl-carrier protein] O-methyltransferase of Methylovorus sp. (strain MP688).